A 553-amino-acid polypeptide reads, in one-letter code: Cytochrome P450 86A2 (553 aa).

A helical membrane pass occupies residues 2–20 (DVSNTMLLVAVVAAYWLWF). Cysteine 459 contributes to the heme binding site.

Belongs to the cytochrome P450 family. Requires heme as cofactor. As to expression, expressed in leaves, stems, flowers and siliques. Expressed at low levels in roots. Expressed in guard cells of cotyledons and leaves.

It is found in the membrane. It carries out the reaction an organic molecule + reduced [NADPH--hemoprotein reductase] + O2 = an alcohol + oxidized [NADPH--hemoprotein reductase] + H2O + H(+). Catalyzes the omega-hydroxylation of various fatty acids (FA). Acts on saturated and unsaturated fatty acids with chain lengths from C12 to C18. Plays a major role in the biosynthesis of extracellular lipids. Involved in the biosynthesis of hydroxylated fatty acids required for cutin biosynthesis, cuticle development and repression of bacterial type III gene expression. In Arabidopsis thaliana (Mouse-ear cress), this protein is Cytochrome P450 86A2 (CYP86A2).